A 599-amino-acid chain; its full sequence is Glucose-6-phosphate 1-dehydrogenase 3, chloroplastic (599 aa).

Positions 1 to 18 (MSSLSCPTYRSRTSSSSP) are enriched in low complexity. Residues 1–23 (MSSLSCPTYRSRTSSSSPFLSNH) are disordered. Residues 1-66 (MSSLSCPTYR…RSQRRSVQSS (66 aa)) constitute a chloroplast transit peptide. Position 67 is an N-acetylvaline (V67). NADP(+) is bound by residues 119-126 (GASGDLAK) and R153. C171 and C179 are disulfide-bonded. An NADP(+)-binding site is contributed by K256. Residues K256, 286–290 (HYLGK), E324, and D343 each bind D-glucose 6-phosphate. The active-site Proton acceptor is the H348. K441 provides a ligand contact to NADP(+). 2 residues coordinate D-glucose 6-phosphate: K444 and R449. Residues R454 and R483 each coordinate NADP(+). A D-glucose 6-phosphate-binding site is contributed by Q485. Residues 491-493 (YLK) and R576 contribute to the NADP(+) site.

The protein belongs to the glucose-6-phosphate dehydrogenase family. As to quaternary structure, forms homodimer. Interacts with G6PD1. Expressed in roots, flowers and siliques.

The protein resides in the plastid. It is found in the chloroplast stroma. The enzyme catalyses D-glucose 6-phosphate + NADP(+) = 6-phospho-D-glucono-1,5-lactone + NADPH + H(+). The protein operates within carbohydrate degradation; pentose phosphate pathway; D-ribulose 5-phosphate from D-glucose 6-phosphate (oxidative stage): step 1/3. Regulated by metabolites. Post-translationally inactivated by cysteine-mediated redox modification via the ferredoxin-thioredoxin system in the light and this avoids futile cycles with photosynthetic CO2 fixation. In terms of biological role, catalyzes the rate-limiting step of the oxidative pentose-phosphate pathway, which represents a route for the dissimilation of carbohydrates besides glycolysis. The main function of this enzyme is to provide reducing power (NADPH) and pentose phosphates for fatty acid and nucleic acid synthesis which are involved in membrane synthesis and cell division. This is Glucose-6-phosphate 1-dehydrogenase 3, chloroplastic from Arabidopsis thaliana (Mouse-ear cress).